Here is a 440-residue protein sequence, read N- to C-terminus: Chromosome partition protein MukF (440 aa).

The segment at 208–236 is leucine-zipper; that stretch reads LSETSGTLRELQDTLEAAGDKLQANLLQI.

It belongs to the MukF family. As to quaternary structure, interacts, and probably forms a ternary complex, with MukE and MukB via its C-terminal region. The complex formation is stimulated by calcium or magnesium. It is required for an interaction between MukE and MukB.

It is found in the cytoplasm. The protein localises to the nucleoid. Involved in chromosome condensation, segregation and cell cycle progression. May participate in facilitating chromosome segregation by condensation DNA from both sides of a centrally located replisome during cell division. Not required for mini-F plasmid partitioning. Probably acts via its interaction with MukB and MukE. Overexpression results in anucleate cells. It has a calcium binding activity. The chain is Chromosome partition protein MukF from Cronobacter sakazakii (strain ATCC BAA-894) (Enterobacter sakazakii).